Here is a 207-residue protein sequence, read N- to C-terminus: MGNPKKRAEKAEAAKSRKQDEEKKKKDAEEDEKWSKGVKTNKKEQEAEKRKAALERKAERERLEKEEMESLPSKGGKGSKKAAKKNSSLDAFLNETPQTASYSARNIDDALDLLSLNNSSSKDKIDRHPERRFKAALTEYKQSRLPELRKEQPGLRLNQYEDIMYKEFQKHPDNPFNKMNVSYNTSQDEVEQLRKARKAELEARLRE.

The interval 1–90 (MGNPKKRAEK…KAAKKNSSLD (90 aa)) is disordered. Positions 5 to 71 (KKRAEKAEAA…RLEKEEMESL (67 aa)) form a coiled coil. Basic and acidic residues-rich tracts occupy residues 9–28 (EKAEAAKSRKQDEEKKKKDA) and 41–65 (NKKEQEAEKRKAALERKAERERLEK).

Belongs to the CCDC124 family. In terms of assembly, associates with translationally inactive ribosomes in the nonrotated state.

It is found in the cytoplasm. Its subcellular location is the nucleus. In terms of biological role, ribosome-binding protein involved in ribosome hibernation by associating with translationally inactive ribosomes. Required for translational recovery after starvation from stationary phase. May facilitate rapid translation reactivation by stabilizing the recycling-competent state of inactive ribosomes. In Schizosaccharomyces pombe (strain 972 / ATCC 24843) (Fission yeast), this protein is Coiled-coil domain-containing protein 124 homolog.